Reading from the N-terminus, the 333-residue chain is DNA repair and recombination protein RadA (333 aa).

127–134 is a binding site for ATP; it reads GEFGSGKT.

Belongs to the eukaryotic RecA-like protein family.

Involved in DNA repair and in homologous recombination. Binds and assemble on single-stranded DNA to form a nucleoprotein filament. Hydrolyzes ATP in a ssDNA-dependent manner and promotes DNA strand exchange between homologous DNA molecules. This is DNA repair and recombination protein RadA from Pyrobaculum arsenaticum (strain DSM 13514 / JCM 11321 / PZ6).